The sequence spans 359 residues: Innexin inx2 (359 aa).

Topologically, residues methionine 1–asparagine 22 are cytoplasmic. A helical membrane pass occupies residues leucine 23–threonine 43. The Extracellular portion of the chain corresponds to serine 44–tyrosine 109. The chain crosses the membrane as a helical span at residues glutamine 110 to tryptophan 130. The Cytoplasmic segment spans residues lysine 131 to phenylalanine 180. The chain crosses the membrane as a helical span at residues phenylalanine 181–phenylalanine 201. Residues leucine 202–lysine 266 lie on the Extracellular side of the membrane. The helical transmembrane segment at isoleucine 267–valine 287 threads the bilayer. The Cytoplasmic segment spans residues tyrosine 288–valine 359.

The protein belongs to the pannexin family. Widespread expression in embryo, in anterior and posterior row of neural precursors, midline precursors and in epithelial sheet of stomodeum.

Its subcellular location is the cell membrane. It localises to the cell junction. The protein resides in the gap junction. Its function is as follows. Structural components of the gap junctions. The polypeptide is Innexin inx2 (inx2) (Schistocerca americana (American grasshopper)).